The sequence spans 481 residues: Probable glycine dehydrogenase (decarboxylating) subunit 2 (481 aa).

The interval Met-1–Val-23 is disordered. Lys-263 bears the N6-(pyridoxal phosphate)lysine mark.

This sequence belongs to the GcvP family. C-terminal subunit subfamily. The glycine cleavage system is composed of four proteins: P, T, L and H. In this organism, the P 'protein' is a heterodimer of two subunits. Pyridoxal 5'-phosphate serves as cofactor.

It catalyses the reaction N(6)-[(R)-lipoyl]-L-lysyl-[glycine-cleavage complex H protein] + glycine + H(+) = N(6)-[(R)-S(8)-aminomethyldihydrolipoyl]-L-lysyl-[glycine-cleavage complex H protein] + CO2. The glycine cleavage system catalyzes the degradation of glycine. The P protein binds the alpha-amino group of glycine through its pyridoxal phosphate cofactor; CO(2) is released and the remaining methylamine moiety is then transferred to the lipoamide cofactor of the H protein. This Francisella philomiragia subsp. philomiragia (strain ATCC 25017 / CCUG 19701 / FSC 153 / O#319-036) protein is Probable glycine dehydrogenase (decarboxylating) subunit 2.